A 360-amino-acid polypeptide reads, in one-letter code: MAYSPPTLSSLIARTEQNIEQRLPGSWPQAREKTLSAIAYAQAGLAAGCHEHISWVGRQIIPSTADEDELLEHCRFWGVRRKQATAASGPLTVTTSAATTIPAGTRWQRADGVVYSLADTIVIDRAGTTEITVTALAAGEAGNTGENTLLTLITPVACVVSDAITVKGFSGGADIESAAELLSRLEYRVQYPPFGGNQFDYVRWAREVSGVTRAWCFPTWKGGGTVGVTFVMDNRSNIFPQPADVERVADYIAGHTDPITGLIVGQPDGVNVTVFAPKAKPVNPRIYISPKTAELKQAITNAINTMFFNEVMPGGALAPSRIIRAVAGVTGLDDFEVRFPTEIQRSENTELLTAGTIEWL.

It belongs to the Mu gp47/PBSX XkdT family. Part of a complex composed of three DNA circularization protein N, three baseplate hub protein gp44 and three sub-complex wedge (made of two copies of each baseplate protein gp46, gp47 and gp48) that forms the baseplate.

Its subcellular location is the virion. The protein resides in the host cytoplasm. Component of the baseplate. Probably involved in tail assembly. The chain is Baseplate protein gp47 from Escherichia phage Mu (Bacteriophage Mu).